Reading from the N-terminus, the 227-residue chain is ATP-dependent dethiobiotin synthetase BioD (227 aa).

ATP is bound at residue Asp-13 to Tyr-18. Thr-17 contributes to the Mg(2+) binding site. The active site involves Lys-38. A substrate-binding site is contributed by Ser-42. ATP contacts are provided by residues Asp-55, Glu-116–Gly-119, and Asn-179–Asn-180. Positions 55 and 116 each coordinate Mg(2+).

Belongs to the dethiobiotin synthetase family. In terms of assembly, homodimer. Mg(2+) serves as cofactor.

It localises to the cytoplasm. The catalysed reaction is (7R,8S)-7,8-diammoniononanoate + CO2 + ATP = (4R,5S)-dethiobiotin + ADP + phosphate + 3 H(+). The protein operates within cofactor biosynthesis; biotin biosynthesis; biotin from 7,8-diaminononanoate: step 1/2. Functionally, catalyzes a mechanistically unusual reaction, the ATP-dependent insertion of CO2 between the N7 and N8 nitrogen atoms of 7,8-diaminopelargonic acid (DAPA, also called 7,8-diammoniononanoate) to form a ureido ring. The protein is ATP-dependent dethiobiotin synthetase BioD of Clostridium botulinum (strain Okra / Type B1).